Reading from the N-terminus, the 257-residue chain is MSVLALDVARDVAAPRRAEILETLRALADGADATTREIASDDDADALERASCDAYFARARDASEARRACARASEKLRAGGALGVVVDDERTATATTEAMVLAGFTTVTREDDGVVRCVKPNWARGTAFALKSRAVRVNATAADAADAWGASAAADDDELIDESALLTELDVNTAPVKYDDCDVGAGKKACKNCTCGRAEAEAAEEATTAASEETFVSACGNCALGDAFRCAGCPYLGQPAFKDQPGTKVELDLGDDL.

An N-terminal SAM-like domain region spans residues 1-132; the sequence is MSVLALDVAR…ARGTAFALKS (132 aa). The interval 133–171 is linker; the sequence is RAVRVNATAADAADAWGASAAADDDELIDESALLTELDV. Cysteine 181, cysteine 190, cysteine 193, and cysteine 195 together coordinate [2Fe-2S] cluster. The fe-S binding site A stretch occupies residues 181-195; that stretch reads CDVGAGKKACKNCTC. [4Fe-4S] cluster contacts are provided by cysteine 219, cysteine 222, cysteine 230, and cysteine 233. Short sequence motifs (cx2C motif) lie at residues 219 to 222 and 230 to 233; these read CGNC and CAGC. Positions 219–233 are fe-S binding site B; it reads CGNCALGDAFRCAGC.

It belongs to the anamorsin family. Monomer. [2Fe-2S] cluster serves as cofactor. Requires [4Fe-4S] cluster as cofactor.

The protein resides in the cytoplasm. The protein localises to the mitochondrion intermembrane space. Component of the cytosolic iron-sulfur (Fe-S) protein assembly (CIA) machinery. Required for the maturation of extramitochondrial Fe-S proteins. Part of an electron transfer chain functioning in an early step of cytosolic Fe-S biogenesis, facilitating the de novo assembly of a [4Fe-4S] cluster on the cytosolic Fe-S scaffold complex. Electrons are transferred from NADPH via a FAD- and FMN-containing diflavin oxidoreductase. Together with the diflavin oxidoreductase, also required for the assembly of the diferric tyrosyl radical cofactor of ribonucleotide reductase (RNR), probably by providing electrons for reduction during radical cofactor maturation in the catalytic small subunit. This is Anamorsin homolog from Ostreococcus lucimarinus (strain CCE9901).